The primary structure comprises 968 residues: Alanine--tRNA ligase, cytoplasmic (968 aa).

At Met1 the chain carries N-acetylmethionine. Residues Ser3 and Ser8 each carry the phosphoserine modification. Lys19 is modified (N6-acetyllysine). ATP contacts are provided by residues Arg77, His95, Trp176, and 214–216 (IWN). Asn216 and Asp239 together coordinate L-alanine. Gly243 provides a ligand contact to ATP. Ser399 and Ser555 each carry phosphoserine. Zn(2+) is bound by residues His605, His609, Cys723, and His727. The Nuclear localization signal motif lies at 750–763 (RRIVAVTGAEAQKA). Lys876 is modified (N6-acetyllysine). Lys943 bears the N6,N6,N6-trimethyllysine; alternate mark. Lys943 is subject to N6,N6-dimethyllysine; alternate. Residue Lys943 is modified to N6-methyllysine; alternate.

It belongs to the class-II aminoacyl-tRNA synthetase family. Monomer. Interacts with ANKRD16; the interaction is direct. Zn(2+) is required as a cofactor. In terms of processing, ISGylated. Post-translationally, methylation at 'Lys-943' by METTL21C.

It localises to the cytoplasm. It is found in the nucleus. It carries out the reaction tRNA(Ala) + L-alanine + ATP = L-alanyl-tRNA(Ala) + AMP + diphosphate. It catalyses the reaction (S)-lactate + ATP + H(+) = (S)-lactoyl-AMP + diphosphate. The enzyme catalyses (S)-lactoyl-AMP + L-lysyl-[protein] = N(6)-[(S)-lactoyl]-L-lysyl-[protein] + AMP + 2 H(+). The protein lactyltransferase activity is inhibited by beta-alanine. Its function is as follows. Catalyzes the attachment of alanine to tRNA(Ala) in a two-step reaction: alanine is first activated by ATP to form Ala-AMP and then transferred to the acceptor end of tRNA(Ala). Also edits incorrectly charged tRNA(Ala) via its editing domain. In presence of high levels of lactate, also acts as a protein lactyltransferase that mediates lactylation of lysine residues in target proteins, such as TEAD1, TP53/p53 and YAP1. Protein lactylation takes place in a two-step reaction: lactate is first activated by ATP to form lactate-AMP and then transferred to lysine residues of target proteins. Acts as an inhibitor of TP53/p53 activity by catalyzing lactylation of TP53/p53. Acts as a positive regulator of the Hippo pathway by mediating lactylation of TEAD1 and YAP1. The chain is Alanine--tRNA ligase, cytoplasmic from Homo sapiens (Human).